Reading from the N-terminus, the 368-residue chain is Propane 2-monooxygenase, hydroxylase component small subunit (368 aa).

Positions 1–17 are enriched in basic and acidic residues; sequence MSAPEKPRERSFPKIEF. Positions 1 to 32 are disordered; that stretch reads MSAPEKPRERSFPKIEFTDSEAGAKEFPSSKS.

Belongs to the TmoE/XamoE family. As to quaternary structure, the propane 2-monooxygenase multicomponent enzyme system is composed of an electron transfer component and a monooxygenase component interacting with the effector protein MimD. The electron transfer component is composed of a reductase (MimB), and the monooxygenase component is formed by a large subunit (MimA) and a small subunit (MimC). Requires the presence of the chaperonin-like protein MimG to ensure a productive folding, resulting of a soluble MimC, which leads to the active form of MimABCD.

It catalyses the reaction propane + NADH + O2 + H(+) = propan-2-ol + NAD(+) + H2O. It carries out the reaction acetone + NADH + O2 + H(+) = hydroxyacetone + NAD(+) + H2O. The catalysed reaction is butan-2-one + NADH + O2 + H(+) = 1-hydroxy-2-butanone + NAD(+) + H2O. The enzyme catalyses phenol + NADH + O2 + H(+) = hydroquinone + NAD(+) + H2O. Its function is as follows. Component of the propane 2-monooxygenase multicomponent enzyme system which is involved in the degradation of propane via the O2-dependent hydroxylation of propane. Also involved in the degradation of acetone via the O2-dependent hydroxylation of acetone. Also able to catalyze the oxidation of phenol, methylethylketone (2-butanone), 1-propanol and 2-propanol. This chain is Propane 2-monooxygenase, hydroxylase component small subunit, found in Mycolicibacterium smegmatis (strain ATCC 700084 / mc(2)155) (Mycobacterium smegmatis).